A 485-amino-acid chain; its full sequence is Cysteine--tRNA ligase (485 aa).

Zn(2+) is bound at residue C27. The 'HIGH' region signature appears at 29–39 (ITAYDLCHLGH). The Zn(2+) site is built by C208, H233, and E237. The short motif at 265–269 (KMSKS) is the 'KMSKS' region element. K268 provides a ligand contact to ATP.

It belongs to the class-I aminoacyl-tRNA synthetase family. In terms of assembly, monomer. Zn(2+) is required as a cofactor.

It is found in the cytoplasm. It carries out the reaction tRNA(Cys) + L-cysteine + ATP = L-cysteinyl-tRNA(Cys) + AMP + diphosphate. This Oleidesulfovibrio alaskensis (strain ATCC BAA-1058 / DSM 17464 / G20) (Desulfovibrio alaskensis) protein is Cysteine--tRNA ligase.